We begin with the raw amino-acid sequence, 102 residues long: Protein translation factor SUI1 homolog (102 aa).

This sequence belongs to the SUI1 family.

This Nitrosopumilus maritimus (strain SCM1) protein is Protein translation factor SUI1 homolog.